Consider the following 906-residue polypeptide: Catenin alpha-1 (906 aa).

Thr2 is modified (N-acetylthreonine). The interval 2-228 (TAVHAGNINF…PILYTASQAC (227 aa)) is involved in homodimerization. Lys57 is covalently cross-linked (Glycyl lysine isopeptide (Lys-Gly) (interchain with G-Cter in SUMO2)). Positions 97 to 148 (VRKQGDLMKSAAGEFADDPCSSVKRGNMVRAARALLSAVTRLLILADMADVY) are interaction with JUP and CTNNB1. Residues Ser264, Ser295, and Ser297 each carry the phosphoserine modification. The segment at 325–394 (TRDDRRERIV…AVMDHVSDSF (70 aa)) is interaction with alpha-actinin. Thr634 is subject to Phosphothreonine. Position 641 is a phosphoserine (Ser641). Thr645 is modified (phosphothreonine). A phosphoserine mark is found at Ser652 and Ser655. Thr658 is subject to Phosphothreonine. Lys797 participates in a covalent cross-link: Glycyl lysine isopeptide (Lys-Gly) (interchain with G-Cter in SUMO2). The residue at position 851 (Ser851) is a Phosphoserine. Positions 864–880 (PEKKPLVKREKQDETQT) are enriched in basic and acidic residues. The tract at residues 864 to 894 (PEKKPLVKREKQDETQTKIKRASQKKHVNPV) is disordered. The span at 881–891 (KIKRASQKKHV) shows a compositional bias: basic residues.

This sequence belongs to the vinculin/alpha-catenin family. As to quaternary structure, monomer and homodimer; the monomer preferentially binds to CTNNB1 and the homodimer to actin. Component of an cadherin:catenin adhesion complex composed of at least of CDH26, beta-catenin/CTNNB1, alpha-catenin/CTNNA1 and p120 catenin/CTNND1. Possible component of an E-cadherin/ catenin adhesion complex together with E-cadherin/CDH1 and beta-catenin/CTNNB1 or gamma-catenin/JUP; the complex is located to adherens junctions. The stable association of CTNNA1 is controversial as CTNNA1 was shown not to bind to F-actin when assembled in the complex. Alternatively, the CTNNA1-containing complex may be linked to F-actin by other proteins such as LIMA1. Binds AFDN and F-actin. Interacts with LIMA1. Interacts with ARHGAP21. Interacts with AJUBA. Interacts with vinculin/VCL. Interacts with TJP2/ZO2 (via N-terminus). Interacts with TJP1/ZO1 (via N-terminus). In terms of processing, sumoylated. Phosphorylation seems to contribute to the strength of cell-cell adhesion rather than to the basic capacity for cell-cell adhesion. As to expression, expressed in cerebellum, heart, liver, small intestine, kidney and placenta (at protein level).

The protein resides in the cytoplasm. The protein localises to the cytoskeleton. Its subcellular location is the cell junction. It is found in the adherens junction. It localises to the cell membrane. The protein resides in the nucleus. In terms of biological role, associates with the cytoplasmic domain of a variety of cadherins. The association of catenins to cadherins produces a complex which is linked to the actin filament network, and which seems to be of primary importance for cadherins cell-adhesion properties. Can associate with both E- and N-cadherins. Originally believed to be a stable component of E-cadherin/catenin adhesion complexes and to mediate the linkage of cadherins to the actin cytoskeleton at adherens junctions. In contrast, cortical actin was found to be much more dynamic than E-cadherin/catenin complexes and CTNNA1 was shown not to bind to F-actin when assembled in the complex suggesting a different linkage between actin and adherens junctions components. The homodimeric form may regulate actin filament assembly and inhibit actin branching by competing with the Arp2/3 complex for binding to actin filaments. Involved in the regulation of WWTR1/TAZ, YAP1 and TGFB1-dependent SMAD2 and SMAD3 nuclear accumulation. May play a crucial role in cell differentiation. This chain is Catenin alpha-1, found in Mus musculus (Mouse).